We begin with the raw amino-acid sequence, 303 residues long: Growth/differentiation factor 15 (303 aa).

A signal peptide spans 1–30 (MALRALHAQPTGGPQLRFLLFLLLLLLLLS). Residues 31–188 (WPSQGDALAL…LRSAAGRGRR (158 aa)) constitute a propeptide that is removed on maturation. N-linked (GlcNAc...) asparagine glycosylation is present at Asn-71. Disulfide bonds link Cys-198-Cys-205, Cys-206-Cys-269, Cys-235-Cys-300, and Cys-239-Cys-302.

It belongs to the TGF-beta family. As to quaternary structure, homodimer; disulfide-linked. Interacts with GFRAL and RET; ligand of GFRAL, which mediates GDF15 internalization and cellular signaling through interaction with RET via the formation of a 2:2:2 ternary complex composed of GDF15, GFRAL and RET. Detected in plasma (at protein level).

It is found in the secreted. In terms of biological role, hormone produced in response to various stresses to confer information about those stresses to the brain, and trigger an aversive response, characterized by nausea and/or loss of appetite. The aversive response is both required to reduce continuing exposure to those stresses at the time of exposure and to promote avoidance behavior in the future. Acts by binding to its receptor, GFRAL, activating GFRAL-expressing neurons localized in the area postrema and nucleus tractus solitarius of the brainstem. It then triggers the activation of neurons localized within the parabrachial nucleus and central amygdala, which constitutes part of the 'emergency circuit' that shapes responses to stressful conditions. The GDF15-GFRAL signal induces expression of genes involved in metabolism, such as lipid metabolism in adipose tissues. Contributes to the effect of metformin, an anti-diabetic drug, on appetite reduction and weight loss: produced in the kidney in response to metformin treatment, thereby activating the GDF15-GFRAL response, leading to reduced appetite and weight. Required for avoidance behavior in response to food allergens: induced downstream of mast cell activation to promote aversion and minimize harmful effects of exposure to noxious substances. Produced in response to anticancer drugs, such as camptothecin or cisplatin, promoting nausea and contributing to malnutrition. Overproduced in many cancers, promoting anorexia in cancer (cachexia). Responsible for the risk of nausea during pregnancy: high levels of GDF15 during pregnancy, mostly originating from embryos, are associated with increased nausea. Maternal sensitivity to nausea is probably determined by pre-pregnancy exposure to GDF15, females with naturally high level of GDF15 being less susceptible to nausea than female rats with low levels of GDF15 before pregnancy. Promotes metabolic adaptation in response to systemic inflammation caused by bacterial and viral infections in order to promote tissue tolerance and prevent tissue damage. Required for tissue tolerance in response to myocardial infarction by acting as an inhibitor of leukocyte integring activation, thereby protecting against cardiac rupture. Inhibits growth hormone signaling on hepatocytes. This Rattus norvegicus (Rat) protein is Growth/differentiation factor 15.